A 312-amino-acid chain; its full sequence is Olfactory receptor 5J2 (312 aa).

Residues 1–25 lie on the Extracellular side of the membrane; that stretch reads MADDNFTVVTEFILLGLTDHAELKA. N-linked (GlcNAc...) asparagine glycosylation is present at asparagine 5. A helical transmembrane segment spans residues 26-46; the sequence is VLFVVFLVIYAITLLRNLGMI. Over 47 to 54 the chain is Cytoplasmic; that stretch reads LLIQITSK. A helical transmembrane segment spans residues 55–75; it reads LHTPMYFLLSCLSFVDACYSS. At 76–99 the chain is on the extracellular side; the sequence is AIAPKMLVNLLVVKATISFSACMV. Cysteine 97 and cysteine 189 are joined by a disulfide. A helical transmembrane segment spans residues 100–120; that stretch reads QHLCFGVFITTEGFLLSVMAY. At 121–139 the chain is on the cytoplasmic side; the sequence is DRYVAIVSPLLYTVAMSDR. The helical transmembrane segment at 140–160 threads the bilayer; that stretch reads KCVELVTGSWIGGIVNTLIHT. Topologically, residues 161–196 are extracellular; sequence ISLRRLSFCRLNAVSHFFCDIPSLLKLSCSDTSMNE. A helical transmembrane segment spans residues 197–217; sequence LLLLTFSGVIAMATFLTVIIS. Residues 218-237 lie on the Cytoplasmic side of the membrane; sequence YIFIAFASLRIHSASGRQQA. The chain crosses the membrane as a helical span at residues 238 to 258; it reads FSTCASHLTAVTIFYGTLIFS. The Extracellular segment spans residues 259 to 271; it reads YIQPSSQYFVEQE. Residues 272-292 traverse the membrane as a helical segment; sequence KVVSMFYTLGIPMLNLLIHSL. The Cytoplasmic portion of the chain corresponds to 293–312; it reads RNKDVKEAVKRAIEMKHFLC.

This sequence belongs to the G-protein coupled receptor 1 family.

It is found in the cell membrane. Odorant receptor. This is Olfactory receptor 5J2 (OR5J2) from Homo sapiens (Human).